A 277-amino-acid polypeptide reads, in one-letter code: Ribosomal RNA small subunit methyltransferase A (277 aa).

The S-adenosyl-L-methionine site is built by H15, L17, G42, E64, D89, and N109.

Belongs to the class I-like SAM-binding methyltransferase superfamily. rRNA adenine N(6)-methyltransferase family. RsmA subfamily.

The protein resides in the cytoplasm. The catalysed reaction is adenosine(1518)/adenosine(1519) in 16S rRNA + 4 S-adenosyl-L-methionine = N(6)-dimethyladenosine(1518)/N(6)-dimethyladenosine(1519) in 16S rRNA + 4 S-adenosyl-L-homocysteine + 4 H(+). In terms of biological role, specifically dimethylates two adjacent adenosines (A1518 and A1519) in the loop of a conserved hairpin near the 3'-end of 16S rRNA in the 30S particle. May play a critical role in biogenesis of 30S subunits. In Synechococcus sp. (strain CC9311), this protein is Ribosomal RNA small subunit methyltransferase A.